Consider the following 362-residue polypeptide: Homeobox-leucine zipper protein HOX11 (362 aa).

A compositionally biased stretch (basic and acidic residues) spans 27-45 (REEAAEAGRRDHEVRRELE). The segment at 27 to 179 (REEAAEAGRR…DDGGSARKKL (153 aa)) is disordered. Residues 64 to 75 (LTLLPMVPGLGL) show a composition bias toward low complexity. Polar residues predominate over residues 126–135 (LSSSPNNSAG). Residues 145–160 (HGLGGNDAAPGGGGGD) are compositionally biased toward gly residues. The homeobox DNA-binding region spans 174–233 (SARKKLRLSKEQSAFLEESFKEHSTLNPKQKLALAKQLNLRPRQVEVWFQNRRARTKLKQ). The tract at residues 232–276 (KQTEVDCEYLKRCCETLTEENRRLQKELAELRALKTVHPFYMHLP) is leucine-zipper. A disordered region spans residues 301 to 330 (AATSSTAAPPAAPSSGGIAATSSSAAAAAA).

Belongs to the HD-ZIP homeobox family. Class II subfamily. In terms of tissue distribution, expressed in stems, leaf sheaths and blades and panicles.

The protein localises to the nucleus. Its function is as follows. Probable transcription factor. The sequence is that of Homeobox-leucine zipper protein HOX11 (HOX11) from Oryza sativa subsp. japonica (Rice).